Consider the following 179-residue polypeptide: uncharacterized protein (179 aa).

Residues 160–179 are disordered; sequence QPIEPNGTQPATETKTPVGV. Residues 165 to 179 show a composition bias toward polar residues; that stretch reads NGTQPATETKTPVGV.

The protein belongs to the Dps family.

This is an uncharacterized protein from Anabaena variabilis.